A 519-amino-acid chain; its full sequence is Glycerophosphoinositol permease 1 (519 aa).

The tract at residues 1–32 is disordered; that stretch reads MSDLVKSSEVIETTEVPPHNNNNNKRHFKYDS. The chain crosses the membrane as a helical span at residues 39–59; the sequence is LAGGVKLKDALMILCAGFALI. N-linked (GlcNAc...) asparagine glycosylation is present at asparagine 93. 3 helical membrane passes run 94–114, 117–137, and 141–161; these read ASLV…DYIG, WSIV…AASH, and VNGM…GIGA. Asparagine 175 is a glycosylation site (N-linked (GlcNAc...) asparagine). A run of 8 helical transmembrane segments spans residues 186-206, 216-236, 273-293, 313-333, 337-357, 363-383, 404-424, and 432-452; these read ILAT…IFLI, DAIW…VFYF, VAWF…AGII, LLLG…VDIL, YTMM…GCGY, ITGL…FGPG, GISA…FSPI, and WTFI…FIFI. Residues 487–500 show a composition bias toward acidic residues; sequence EEEDLEGSSEDSSD. The segment at 487-519 is disordered; that stretch reads EEEDLEGSSEDSSDGEIVKNNTKNDVEKVDALK. Residue asparagine 506 is glycosylated (N-linked (GlcNAc...) asparagine). Positions 508 to 519 are enriched in basic and acidic residues; it reads TKNDVEKVDALK.

It belongs to the major facilitator superfamily. Sugar transporter (TC 2.A.1.1) family.

The protein localises to the cell membrane. It catalyses the reaction sn-glycero-3-phospho-1D-myo-inositol(out) = sn-glycero-3-phospho-1D-myo-inositol(in). Functionally, glycerophosphodiester transporter that mediates uptake of glycerophosphoinositol (GroPIns) as a source of inositol and phosphate. Does not possess detectable glycerophosphocholine (GroPCho) transport activity. Although no glycerophosphoinositol transport activity occurs in the absence of GIT1, C.albicans is still able to use glycerophosphoinositol as a phosphate source at pH 7.5, albeit slowly. Thus, a second, GIT1-independent, mechanism must exist for utilizing glycerophosphoinositol as a phosphate source at physiological pH. The expanded ability to utilize GroPIns and GroPCho results from the organism's pathogenic nature and its need to occupy a variety of environments within its host organism. This possibility is buttressed by the fact that GroPIns and GroPCho are present and abundant in human fluids. This Candida albicans (strain SC5314 / ATCC MYA-2876) (Yeast) protein is Glycerophosphoinositol permease 1.